A 377-amino-acid chain; its full sequence is Putative holocytochrome-c synthase (377 aa).

2 disordered regions span residues 1 to 29 (MTSS…SNEA) and 111 to 136 (QNSE…KPAG). Residues 7-22 (TTDHPRTGKCPIDHSK) show a composition bias toward basic and acidic residues. HRM repeat units follow at residues 114–119 (EATPAV) and 124–129 (TCPMSN).

Belongs to the cytochrome c-type heme lyase family.

The protein resides in the mitochondrion inner membrane. It is found in the mitochondrion intermembrane space. It carries out the reaction holo-[cytochrome c] = apo-[cytochrome c] + heme b. Lyase that catalyzes the covalent linking of the heme group to the cytochrome C apoprotein to produce the mature functional cytochrome. This chain is Putative holocytochrome-c synthase, found in Schizosaccharomyces pombe (strain 972 / ATCC 24843) (Fission yeast).